Here is a 293-residue protein sequence, read N- to C-terminus: MDKLNSTLTAVKNLRSNVRLCFEHLADGTDGESGEESRNKFVNDFQERFAAINSQIREVEQLINGLPVPPTPYSLGNTAYLAQETSQDRQALYPQLVNSYKWMDKVHDHSFLAFNNLNQNTLRRSYNYCSQKRQRLPFSSFNNDPDHIDKLLSEINTPPHTSYRIFRPFGTNAVTIVTISNVMKAAIVFKGVLIEWVTVKGFDEPLEHDDLWAESRYEVFRKVQDHAHSAMLHFFSPTLPDLAVKSYITWLNSHVKLFLEPCKRCGKFVVNGLPPTWRDLRTLEPFHEDCRNC.

It belongs to the Mediator complex subunit 27 family. Component of the Mediator complex, which includes at least CDK8, MED4, MED6, MED11, MED14, MED17, MED18, MED20, MED21, MED22, MED27, MED28, MED30 and MED31.

The protein resides in the nucleus. In terms of biological role, component of the Mediator complex, a coactivator involved in the regulated transcription of nearly all RNA polymerase II-dependent genes. Mediator functions as a bridge to convey information from gene-specific regulatory proteins to the basal RNA polymerase II transcription machinery. Mediator is recruited to promoters by direct interactions with regulatory proteins and serves as a scaffold for the assembly of a functional preinitiation complex with RNA polymerase II and the general transcription factors. Required for activated transcription of the MtnA gene. The polypeptide is Mediator of RNA polymerase II transcription subunit 27 (MED27) (Drosophila melanogaster (Fruit fly)).